The chain runs to 326 residues: Vitamin B12 import system permease protein BtuC (326 aa).

9 consecutive transmembrane segments (helical) span residues 15 to 35, 61 to 81, 88 to 108, 112 to 132, 146 to 166, 184 to 204, 240 to 260, 274 to 294, and 302 to 322; these read WLLCLSVLMLLALLLSLCAGE, LAVLLVGAALAISGAVMQALF, PGLLGVSNGAGVGLIAAVLLG, LPNWALGLCAIAGALIITLIL, LLAGVALGIICSALMTWAIYF, GGVDWRQSWLMLALIPVLLWI, GWMVGVSVALAGAIGFIGLVI, VLLPGCALAGASALLLADIVA, and ELPIGVVTATLGAPVFIWLLL.

It belongs to the binding-protein-dependent transport system permease family. FecCD subfamily. The complex is composed of two ATP-binding proteins (BtuD), two transmembrane proteins (BtuC) and a solute-binding protein (BtuF).

It is found in the cell inner membrane. Its function is as follows. Part of the ABC transporter complex BtuCDF involved in vitamin B12 import. Involved in the translocation of the substrate across the membrane. The chain is Vitamin B12 import system permease protein BtuC from Escherichia coli O9:H4 (strain HS).